The primary structure comprises 196 residues: Holliday junction branch migration complex subunit RuvA (196 aa).

Positions 1–63 (MYEYFKGIIS…EDAELLYGFA (63 aa)) are domain I. The domain II stretch occupies residues 64–142 (TEEEKQLFLS…AAGSPAESKA (79 aa)). Residues 143-146 (PVQT) are flexible linker. Positions 147–196 (ADNQELEEAMEAMLALGYKAAELKKIKKFFEGTTDTAENYIKSALKMLVK) are domain III.

This sequence belongs to the RuvA family. As to quaternary structure, homotetramer. Forms an RuvA(8)-RuvB(12)-Holliday junction (HJ) complex. HJ DNA is sandwiched between 2 RuvA tetramers; dsDNA enters through RuvA and exits via RuvB. An RuvB hexamer assembles on each DNA strand where it exits the tetramer. Each RuvB hexamer is contacted by two RuvA subunits (via domain III) on 2 adjacent RuvB subunits; this complex drives branch migration. In the full resolvosome a probable DNA-RuvA(4)-RuvB(12)-RuvC(2) complex forms which resolves the HJ.

Its subcellular location is the cytoplasm. Its function is as follows. The RuvA-RuvB-RuvC complex processes Holliday junction (HJ) DNA during genetic recombination and DNA repair, while the RuvA-RuvB complex plays an important role in the rescue of blocked DNA replication forks via replication fork reversal (RFR). RuvA specifically binds to HJ cruciform DNA, conferring on it an open structure. The RuvB hexamer acts as an ATP-dependent pump, pulling dsDNA into and through the RuvAB complex. HJ branch migration allows RuvC to scan DNA until it finds its consensus sequence, where it cleaves and resolves the cruciform DNA. This is Holliday junction branch migration complex subunit RuvA from Streptococcus sanguinis (strain SK36).